We begin with the raw amino-acid sequence, 130 residues long: Large ribosomal subunit protein bL19c (130 aa).

Belongs to the bacterial ribosomal protein bL19 family.

It localises to the plastid. Its subcellular location is the chloroplast. The protein is Large ribosomal subunit protein bL19c (rpl19) of Chlorella vulgaris (Green alga).